Consider the following 1035-residue polypeptide: Potassium-transporting ATPase alpha chain 1 (1035 aa).

The interval 1 to 41 is disordered; the sequence is MGKAENYELYSVELGPGPGGDMAAKMSKKKKAGGGGGKRKE. At 1 to 98 the chain is on the cytoplasmic side; sequence MGKAENYELY…NALRPPRGTP (98 aa). Phosphotyrosine occurs at positions 7 and 10. The span at 26–40 shows a compositional bias: basic residues; that stretch reads MSKKKKAGGGGGKRK. Serine 27 is modified (phosphoserine). A helical transmembrane segment spans residues 99-119; that stretch reads EYVKFARQLAGGLQCLMWVAA. At 120 to 142 the chain is on the lumenal side; the sequence is AICLIAFAIQASEGDLTTDDNLY. A helical membrane pass occupies residues 143–163; sequence LAIALIAVVVVTGCFGYYQEF. At 164–299 the chain is on the cytoplasmic side; the sequence is KSTNIIASFK…NEKTPIAIEI (136 aa). A helical transmembrane segment spans residues 300-319; sequence EHFVDIIAGLAILFGATFFI. Topologically, residues 320-331 are lumenal; sequence VAMCIGYTFLRA. The chain crosses the membrane as a helical span at residues 332–349; sequence MVFFMAIVVAYVPEGLLA. 4 residues coordinate K(+): valine 340, alanine 341, valine 343, and glutamate 345. Topologically, residues 350-783 are cytoplasmic; it reads TVTVCLSLTA…EQGRLIFDNL (434 aa). Aspartate 387 (4-aspartylphosphate intermediate) is an active-site residue. The Mg(2+) site is built by aspartate 387 and threonine 389. A phosphoserine mark is found at serine 463 and serine 601. The Mg(2+) site is built by aspartate 728 and aspartate 732. A helical membrane pass occupies residues 784–803; the sequence is KKSIAYTLTKNIPELTPYLI. K(+) is bound at residue glutamate 797. Over 804–813 the chain is Lumenal; sequence YITVSVPLPL. A helical membrane pass occupies residues 814–834; that stretch reads GCITILFIELCTDIFPSVSLA. Glutamate 822 provides a ligand contact to K(+). The Cytoplasmic portion of the chain corresponds to 835 to 854; that stretch reads YEKAESDIMHLRPRNPKRDR. Serine 840 is modified (phosphoserine). The chain crosses the membrane as a helical span at residues 855-877; the sequence is LVNEPLAAYSYFQIGAIQSFAGF. Topologically, residues 878–929 are lumenal; the sequence is TDYFTAMAQEGWFPLLCVGLRAQWEDHHLQDLQDSYGQEWTFGQRLYQQYTC. Residues 930 to 949 traverse the membrane as a helical segment; the sequence is YTVFFISIEVCQIADVLIRK. The Cytoplasmic segment spans residues 950 to 963; that stretch reads TRRLSAFQQGFFRN. Serine 954 is subject to Phosphoserine; by PKA. The helical transmembrane segment at 964–982 threads the bilayer; that stretch reads KILVIAIVFQVCIGCFLCY. Over 983–997 the chain is Lumenal; the sequence is CPGMPNIFNFMPIRF. The helical transmembrane segment at 998-1018 threads the bilayer; it reads QWWLVPLPYGILIFVYDEIRK. Over 1019-1035 the chain is Cytoplasmic; sequence LGVRCCPGSWWDQELYY.

The protein belongs to the cation transport ATPase (P-type) (TC 3.A.3) family. Type IIC subfamily. In terms of assembly, the gastric H(+)/K(+) ATPase pump is composed of the catalytic alpha subunit ATP4A and the regulatory beta subunit ATP4B. Interacts (via the P-domain) with ATP4B (via N-terminus); this interaction stabilizes the lumenal-open E2 conformation state and prevents the reverse reaction of the transport cycle. As to expression, expressed in gastric parietal cells (at protein level).

The protein localises to the apical cell membrane. The catalysed reaction is K(+)(out) + ATP + H2O + H(+)(in) = K(+)(in) + ADP + phosphate + 2 H(+)(out). Its function is as follows. The catalytic subunit of the gastric H(+)/K(+) ATPase pump which transports H(+) ions in exchange for K(+) ions across the apical membrane of parietal cells. Uses ATP as an energy source to pump H(+) ions to the gastric lumen while transporting K(+) ion from the lumen into the cell. Remarkably generates a million-fold proton gradient across the gastric parietal cell membrane, acidifying the gastric juice down to pH 1. Within a transport cycle, the transfer of a H(+) ion across the membrane is coupled to ATP hydrolysis and is associated with a transient phosphorylation that shifts the pump conformation from inward-facing (E1) to outward-facing state (E2). The release of the H(+) ion in the stomach lumen is followed by binding of K(+) ion converting the pump conformation back to the E1 state. The sequence is that of Potassium-transporting ATPase alpha chain 1 from Homo sapiens (Human).